The following is a 386-amino-acid chain: 2-deoxy-scyllo-inosose synthase (386 aa).

Residues Asp42, 73–76 (EVHK), 105–109 (GITGN), 129–130 (TT), 140–142 (SLK), and 151–152 (KN) contribute to the NAD(+) site. Lys142 is a catalytic residue. Residue Glu184 participates in Co(2+) binding. Glu244 is a catalytic residue. Positions 247 and 263 each coordinate Co(2+).

It belongs to the sugar phosphate cyclases superfamily. DOI synthase family. It depends on NAD(+) as a cofactor. The cofactor is Co(2+).

It carries out the reaction D-glucose 6-phosphate = 2-deoxy-L-scyllo-inosose + phosphate. It participates in metabolic intermediate biosynthesis; 2-deoxystreptamine biosynthesis; 2-deoxystreptamine from D-glucose 6-phosphate: step 1/4. It functions in the pathway antibiotic biosynthesis; paromomycin biosynthesis. Catalyzes the intramolecular carbocycle formation from D-glucose-6-phosphate to 2-deoxy-scyllo-inosose (DOI). The chain is 2-deoxy-scyllo-inosose synthase (parC) from Streptomyces paromomycinus (Streptomyces rimosus subsp. paromomycinus).